Consider the following 492-residue polypeptide: Alpha-amylase-related protein (492 aa).

The signal sequence occupies residues 1-18; the sequence is MRLSLSVLLCLGLALTLA. Glutamine 19 bears the Pyrrolidone carboxylic acid mark. The cysteines at positions 46 and 102 are disulfide-linked. Positions 116, 167, and 176 each coordinate Ca(2+). Cysteine 155 and cysteine 169 form a disulfide bridge. Arginine 204 is a binding site for chloride. Aspartate 206 acts as the Nucleophile in catalysis. Position 210 (histidine 210) interacts with Ca(2+). The active-site Proton donor is the glutamate 243. Positions 306 and 341 each coordinate chloride. 3 disulfides stabilise this stretch: cysteine 374–cysteine 380, cysteine 416–cysteine 439, and cysteine 446–cysteine 458.

Belongs to the glycosyl hydrolase 13 family. Monomer. Ca(2+) serves as cofactor. Requires chloride as cofactor.

The protein localises to the secreted. The enzyme catalyses Endohydrolysis of (1-&gt;4)-alpha-D-glucosidic linkages in polysaccharides containing three or more (1-&gt;4)-alpha-linked D-glucose units.. In Drosophila willistoni (Fruit fly), this protein is Alpha-amylase-related protein (Amyrel).